The chain runs to 128 residues: Type-4 ice-structuring protein LS-12 (128 aa).

A signal peptide spans 1–20 (MKFSLVATIVLLALAQGSFA). Gln-21 is modified (pyrrolidone carboxylic acid).

Belongs to the apolipoprotein A1/A4/E family.

The protein resides in the secreted. Antifreeze proteins lower the blood freezing point. This Myoxocephalus octodecemspinosus (Longhorn sculpin) protein is Type-4 ice-structuring protein LS-12.